We begin with the raw amino-acid sequence, 2135 residues long: Nonribosomal peptide synthetase gliP (2135 aa).

The tract at residues 34 to 424 is adenylation 1; the sequence is TYTELDVASS…LPADVEEPLR (391 aa). The region spanning 519-594 is the Carrier 1 domain; sequence TEREQVIAEC…GILPYARDLA (76 aa). Residue serine 555 is modified to O-(pantetheine 4'-phosphoryl)serine. Residues 663-913 are condensation 1; sequence AEHICNAWRQ…MATLPLVCRI (251 aa). Positions 1078 to 1458 are adenylation 2; the sequence is YRELDQKSNA…YQEEPRLTQA (381 aa). The 79-residue stretch at 1544–1622 folds into the Carrier 2 domain; that stretch reads ASIADGIATL…EQVELVRRKR (79 aa). An O-(pantetheine 4'-phosphoryl)serine modification is found at serine 1582. The tract at residues 1642–1905 is condensation 2; it reads SPLERQTWFQ…FLDRLPLRFK (264 aa). A Carrier 3 domain is found at 2061–2134; it reads RRLVGILQRE…DLAQRLYRQV (74 aa). O-(pantetheine 4'-phosphoryl)serine is present on serine 2095.

The protein belongs to the NRP synthetase family.

Its pathway is mycotoxin biosynthesis. Functionally, nonribosomal peptide synthetase; part of the gene cluster that mediates the biosynthesis of gliotoxin, a member of the epipolythiodioxopiperazine (ETP) class of toxins characterized by a disulfide-bridged cyclic dipeptide. The first step in gliotoxin biosynthesis is the condensation of serine and phenylalanine to form the cyclo-L-phenylalanyl-L-serine diketopiperazine (DKP) by the NRPS gliP. GliP is also able to produce the DKP cyclo-L-tryptophanyl-L-serine, suggesting that the substrate specificity of the first adenylation (A) domain in gliP is sufficiently relaxed to accommodate both L-Phe and L-Trp. The cytochrome P450 monooxygenase gliC has been shown to catalyze the subsequent hydroxylation of the alpha-carbon of L-Phe in cyclo-L-phenylalanyl-L-serine whereas the second cytochrome P450 enzyme, gliF, is presumably involved in the modification of the DKP side chain. The glutathione S-transferase (GST) gliG then forms a bis-glutathionylated biosynthetic intermediate which is responsible for the sulfurization of gliotoxin. This bis-glutathionylated intermediate is subsequently processed by the gamma-glutamyl cyclotransferase gliK to remove both gamma-glutamyl moieties. Subsequent processing via gliI yields a biosynthetic intermediate, which is N-methylated via the N-methyltransferase gliN, before the gliotoxin oxidoreductase gliT-mediated disulfide bridge closure. GliN-mediated amide methylation confers stability to ETP, damping the spontaneous formation of tri- and tetrasulfides. Intracellular dithiol gliotoxin oxidized by gliT is subsequently effluxed by gliA. Gliotoxin contributes to pathogenesis during invasive aspergillosis. In macrophages and neutrophils, gliotoxin showed inhibition of various different cell functions including cytokine production, antigen presentation, phagocytosis, and production of reactive oxygen species. This chain is Nonribosomal peptide synthetase gliP, found in Aspergillus fumigatus (strain ATCC MYA-4609 / CBS 101355 / FGSC A1100 / Af293) (Neosartorya fumigata).